The following is a 103-amino-acid chain: Pyrimidine/purine nucleoside phosphorylase (103 aa).

Belongs to the nucleoside phosphorylase PpnP family.

The enzyme catalyses a purine D-ribonucleoside + phosphate = a purine nucleobase + alpha-D-ribose 1-phosphate. It carries out the reaction adenosine + phosphate = alpha-D-ribose 1-phosphate + adenine. The catalysed reaction is cytidine + phosphate = cytosine + alpha-D-ribose 1-phosphate. It catalyses the reaction guanosine + phosphate = alpha-D-ribose 1-phosphate + guanine. The enzyme catalyses inosine + phosphate = alpha-D-ribose 1-phosphate + hypoxanthine. It carries out the reaction thymidine + phosphate = 2-deoxy-alpha-D-ribose 1-phosphate + thymine. The catalysed reaction is uridine + phosphate = alpha-D-ribose 1-phosphate + uracil. It catalyses the reaction xanthosine + phosphate = alpha-D-ribose 1-phosphate + xanthine. Its function is as follows. Catalyzes the phosphorolysis of diverse nucleosides, yielding D-ribose 1-phosphate and the respective free bases. Can use uridine, adenosine, guanosine, cytidine, thymidine, inosine and xanthosine as substrates. Also catalyzes the reverse reactions. The polypeptide is Pyrimidine/purine nucleoside phosphorylase (Sulfurimonas denitrificans (strain ATCC 33889 / DSM 1251) (Thiomicrospira denitrificans (strain ATCC 33889 / DSM 1251))).